A 34-amino-acid chain; its full sequence is Omega/M-ectatotoxin-Et1a subunit B (34 aa).

Cys10 and Cys32 are oxidised to a cystine.

It belongs to the ectatomin family. Ectatomin-Et subfamily. Heterodimer of an A and a B chain; disulfide-linked. In terms of tissue distribution, expressed by the venom gland.

It is found in the secreted. The protein resides in the target cell membrane. Algogenic for animals, human and insects. At high concentrations (0.5-1 uM), it acts as a pore-forming protein that forms nonselective cation channels both in cell and artificial membranes. It is weakly selective for cation over anions channel conductance is identical in both directions. At lower concentrations (1-10 nM), this heterodimer inhibits cardiac L-type calcium currents in isolated rat cardiac ventricular myocytes. In Ectatomma tuberculatum (Selva ant), this protein is Omega/M-ectatotoxin-Et1a subunit B.